Reading from the N-terminus, the 465-residue chain is Phospholipase A1-II 5 (465 aa).

The active-site Acyl-ester intermediate is Ser-233. Catalysis depends on charge relay system residues Ser-233, Asp-297, and His-336.

It belongs to the AB hydrolase superfamily. Lipase family.

It localises to the cytoplasm. Its function is as follows. Acylhydrolase that catalyzes the hydrolysis of phospholipids at the sn-1 position. In Oryza sativa subsp. japonica (Rice), this protein is Phospholipase A1-II 5.